A 567-amino-acid chain; its full sequence is DNA ligase B (567 aa).

The active-site N6-AMP-lysine intermediate is Lys132.

The protein belongs to the NAD-dependent DNA ligase family. LigB subfamily.

The enzyme catalyses NAD(+) + (deoxyribonucleotide)n-3'-hydroxyl + 5'-phospho-(deoxyribonucleotide)m = (deoxyribonucleotide)n+m + AMP + beta-nicotinamide D-nucleotide.. Functionally, catalyzes the formation of phosphodiester linkages between 5'-phosphoryl and 3'-hydroxyl groups in double-stranded DNA using NAD as a coenzyme and as the energy source for the reaction. This Yersinia pestis bv. Antiqua (strain Angola) protein is DNA ligase B.